Consider the following 784-residue polypeptide: Protein-tyrosine-phosphatase MKP1 (784 aa).

Disordered stretches follow at residues 1-73 (MVGR…NSKA) and 94-118 (PKAGSDDVGEWPHPPTPSGNKTGER). Over residues 22-34 (WRSASWSASRTAS) the composition is skewed to low complexity. A phosphothreonine mark is found at Thr64 and Thr109. The Tyrosine-protein phosphatase domain occupies 149-291 (ECSKVADHIY…LLQCQKRVHA (143 aa)). Catalysis depends on Cys235, which acts as the Phosphocysteine intermediate. 235–241 (CCQGVSR) serves as a coordination point for substrate. Residues 488–586 (HSSGSPSSTT…ASPSLAERRG (99 aa)) form a disordered region. 2 stretches are compositionally biased toward low complexity: residues 489 to 510 (SSGSPSSTTSSSSTASPPFLSP) and 521 to 553 (SLKSFSQSSGRSSLRPSIPPSLTLPKFSSLSLL). Positions 554 to 577 (PSQTSPKESRGVNTFLQPSPNRKA) are enriched in polar residues. Phosphoserine occurs at positions 558 and 572.

In terms of assembly, interacts with MPK6. May interact with MPK3 and MPK4. In terms of processing, phosphorylated on threonine and serine residues by MPK6.

The protein resides in the cytoplasm. The protein localises to the cytosol. It carries out the reaction O-phospho-L-tyrosyl-[protein] + H2O = L-tyrosyl-[protein] + phosphate. Its function is as follows. Protein-tyrosine-phosphatase that acts as a negative regulator of MPK6 and MPK3 signaling by dephosphorylating and repressing MPK6 and MPK3. Modulates defense response by repressing salicylic acid (SA) production, camalexin biosynthesis and SNC1-mediated responses. Acts as a negative regulator of MPK6-mediated pathogen-associated molecular pattern (PAMP) responses, including MPK6 and MPK3 activation, accumulation of extracellular reactive oxygen species and inhibition of seedling growth. Involved in UV-B stress tolerance. May be involved in salt and genotoxic stress responses. This chain is Protein-tyrosine-phosphatase MKP1 (MKP1), found in Arabidopsis thaliana (Mouse-ear cress).